Consider the following 187-residue polypeptide: MADRDRSGIYGGAHATYGQQQQQGGGGRPMGEQVKKGMLHDKGPTASQALTVATLFPLGGLLLVLSGLALTASVVGLAVATPVFLIFSPVLVPAALLIGTAVMGFLTSGALGLGGLSSLTCLANTARQAFQRTPDYVEEARRRMAEAAAQAGHKTAQAGQAIQGRAQEAGTGGGAGAGAGGGGRASS.

The residue at position 2 (alanine 2) is an N-acetylalanine. Residues 2–51 (ADRDRSGIYGGAHATYGQQQQQGGGGRPMGEQVKKGMLHDKGPTASQALT) are polar. The interval 17–42 (YGQQQQQGGGGRPMGEQVKKGMLHDK) is disordered. Residues 33–42 (QVKKGMLHDK) show a composition bias toward basic and acidic residues. 3 consecutive transmembrane segments (helical) span residues 50–70 (LTVA…GLAL), 83–103 (VFLI…TAVM), and 104–124 (GFLT…CLAN). The tract at residues 52-123 (VATLFPLGGL…GGLSSLTCLA (72 aa)) is hydrophobic. Residues 155–169 (TAQAGQAIQGRAQEA) show a composition bias toward low complexity. The tract at residues 155 to 187 (TAQAGQAIQGRAQEAGTGGGAGAGAGGGGRASS) is disordered. Residues 170–187 (GTGGGAGAGAGGGGRASS) show a composition bias toward gly residues.

It belongs to the oleosin family. The N-terminus is blocked. Found in embryonic axis, scutellum, and aleurone layer.

It is found in the lipid droplet. It localises to the membrane. Its function is as follows. May have a structural role to stabilize the lipid body during desiccation of the seed by preventing coalescence of the oil. Probably interacts with both lipid and phospholipid moieties of lipid bodies. May also provide recognition signals for specific lipase anchorage in lipolysis during seedling growth. The sequence is that of Oleosin Zm-II (OLE18) from Zea mays (Maize).